Reading from the N-terminus, the 407-residue chain is BRCA1-A complex subunit Abraxas 1 (407 aa).

The 149-residue stretch at Leu7–Lys155 folds into the MPN domain. The residue at position 48 (Ser48) is a Phosphoserine. The stretch at Leu209 to Ala259 forms a coiled coil. The interval Lys344–Phe407 is disordered. Basic and acidic residues predominate over residues Ala347–Ser366. A phosphoserine mark is found at Ser384, Ser385, Ser394, and Ser404. Residues Ile388–Ala399 show a composition bias toward acidic residues. A pSXXF motif motif is present at residues Ser404–Phe407.

This sequence belongs to the FAM175 family. Abraxas subfamily. As to quaternary structure, component of the ARISC complex, at least composed of UIMC1/RAP80, ABRAXAS1, BRCC3/BRCC36, BABAM2 and BABAM1/NBA1. Component of the BRCA1-A complex, at least composed of the BRCA1, BARD1, UIMC1/RAP80, ABRAXAS1, BRCC3/BRCC36, BABAM2 and BABAM1/NBA1. In the complex, interacts directly with UIMC1/RAP80, BRCC3/BRCC36 and BABAM2. Homodimer. Interacts directly (when phosphorylated at Ser-404) with BRCA1. The phosphorylated homodimer can interact directly with two BRCA1 chains, giving rise to a heterotetramer. Binds polyubiquitin. Phosphorylation of Ser-404 of the pSXXF motif by ATM or ATR constitutes a specific recognition motif for the BRCT domain of BRCA1.

The protein resides in the nucleus. In terms of biological role, involved in DNA damage response and double-strand break (DSB) repair. Component of the BRCA1-A complex, acting as a central scaffold protein that assembles the various components of the complex and mediates the recruitment of BRCA1. The BRCA1-A complex specifically recognizes 'Lys-63'-linked ubiquitinated histones H2A and H2AX at DNA lesion sites, leading to target the BRCA1-BARD1 heterodimer to sites of DNA damage at DSBs. This complex also possesses deubiquitinase activity that specifically removes 'Lys-63'-linked ubiquitin on histones H2A and H2AX. In Mus musculus (Mouse), this protein is BRCA1-A complex subunit Abraxas 1.